We begin with the raw amino-acid sequence, 594 residues long: Elongation factor 4 (594 aa).

A tr-type G domain is found at 2 to 184; that stretch reads KNIRNFSIIA…TIVAKVPAPE (183 aa). Residues 14 to 19 and 131 to 134 contribute to the GTP site; these read DHGKST and NKID.

Belongs to the TRAFAC class translation factor GTPase superfamily. Classic translation factor GTPase family. LepA subfamily.

It is found in the cell inner membrane. It carries out the reaction GTP + H2O = GDP + phosphate + H(+). Required for accurate and efficient protein synthesis under certain stress conditions. May act as a fidelity factor of the translation reaction, by catalyzing a one-codon backward translocation of tRNAs on improperly translocated ribosomes. Back-translocation proceeds from a post-translocation (POST) complex to a pre-translocation (PRE) complex, thus giving elongation factor G a second chance to translocate the tRNAs correctly. Binds to ribosomes in a GTP-dependent manner. This Francisella tularensis subsp. tularensis (strain FSC 198) protein is Elongation factor 4.